We begin with the raw amino-acid sequence, 268 residues long: MSDDRDIQLEAEKQGVFLTTMQRFYNWGRRSSVWPLSFGLACCAIEMMATGLARFDLARFGAEMFRASPRQADLMIVAGTVTKKMAPQVVRLYNQMPEPRYVISMGACATSGGPFRDGYNVLRGIDLLIPVDVYIPGCPPRPEALLHALMTLQKQIDAQRLNRVRWYGKREAKEYPVPAFGKHGLEIDGKLVDPVGGLPLISPYTSPTHGEMRSGEIEHPELVRHFPIMDETVELESPNKAKGVAPEIRHNDLKRPAVEVDHARDEQR.

Cysteine 42, cysteine 43, cysteine 108, and cysteine 138 together coordinate [4Fe-4S] cluster. Residues 237 to 268 (SPNKAKGVAPEIRHNDLKRPAVEVDHARDEQR) form a disordered region. Over residues 247-268 (EIRHNDLKRPAVEVDHARDEQR) the composition is skewed to basic and acidic residues.

This sequence belongs to the complex I 20 kDa subunit family. As to quaternary structure, NDH-1 is composed of 14 different subunits. Subunits NuoB, C, D, E, F, and G constitute the peripheral sector of the complex. Requires [4Fe-4S] cluster as cofactor.

It localises to the cell membrane. The enzyme catalyses a quinone + NADH + 5 H(+)(in) = a quinol + NAD(+) + 4 H(+)(out). Its function is as follows. NDH-1 shuttles electrons from NADH, via FMN and iron-sulfur (Fe-S) centers, to quinones in the respiratory chain. The immediate electron acceptor for the enzyme in this species is believed to be ubiquinone. Couples the redox reaction to proton translocation (for every two electrons transferred, four hydrogen ions are translocated across the cytoplasmic membrane), and thus conserves the redox energy in a proton gradient. The protein is NADH-quinone oxidoreductase subunit B 2 of Roseiflexus castenholzii (strain DSM 13941 / HLO8).